The primary structure comprises 289 residues: MPKISHSALRRTFRELLATPTCVETASVFDPMSARIAADLGFEVGILGGSVASLQVLAAPDFALITLSEFVEQATRIGRVAQLPFIADADHGYGNALNVMRTVEELERAGVAALTIEDTLLPAQFGRKSTDLISIEEGIGKVRAALEARVDPELSIIARTNAGVLPTEAVIERTLAYQKAGADGICMVGVADFEHLEQIAENLTVPLMLVTYGNPKLNDAKRLASLGVRVVVAGHGAYFAAIKATYDSLRAQRQLTHSTDNLSATELTHTYTLPENYVAWAEEFMDVKE.

Residue serine 50 coordinates substrate. A Mg(2+)-binding site is contributed by aspartate 88. 2 residues coordinate substrate: arginine 159 and histidine 235.

This sequence belongs to the isocitrate lyase family. Oxaloacetate decarboxylase subfamily. Homotetramer; dimer of dimers. Requires Mg(2+) as cofactor.

The enzyme catalyses oxaloacetate + H(+) = pyruvate + CO2. Catalyzes the decarboxylation of oxaloacetate into pyruvate. Seems to play a role in maintaining cellular concentrations of bicarbonate and pyruvate. The sequence is that of Oxaloacetate decarboxylase from Pseudomonas fluorescens (strain SBW25).